Reading from the N-terminus, the 179-residue chain is Large ribosomal subunit protein uL6 (179 aa).

This sequence belongs to the universal ribosomal protein uL6 family. In terms of assembly, part of the 50S ribosomal subunit.

This protein binds to the 23S rRNA, and is important in its secondary structure. It is located near the subunit interface in the base of the L7/L12 stalk, and near the tRNA binding site of the peptidyltransferase center. This is Large ribosomal subunit protein uL6 from Syntrophomonas wolfei subsp. wolfei (strain DSM 2245B / Goettingen).